A 384-amino-acid polypeptide reads, in one-letter code: Prostaglandin E synthase 2 (384 aa).

Residues 1–56 (MAQAARLSWVLVSSRCALTEGLLTRPWQPLSAQSRAGFTRVAAGSRGAAVRKGSPR) lie on the Lumenal side of the membrane. Residues 57–73 (LLGAAALALGGALGLYH) traverse the membrane as a helical segment. At 74-384 (TVRWHQRSQD…VHHVNPSCKD (311 aa)) the chain is on the cytoplasmic side. The Glutaredoxin domain occupies 89–192 (SAAQLPLSNS…EVITYYPPMK (104 aa)). Glutathione-binding positions include Val147 and 163–164 (DS). Residues 262–376 (YIVREGKFGA…RAIEEAPSVH (115 aa)) enclose the GST C-terminal domain.

It belongs to the GST superfamily. Homodimer. Interacts with EXOSC10. May interact with CEBPB. Synthesized as a Golgi membrane-associated protein, and the proteolytic removal of the N-terminal hydrophobic domain leads to the formation of a mature cytosolic enzyme. Widely expressed. Expressed in brain, heart, liver, colon and lung.

The protein resides in the golgi apparatus membrane. It localises to the nucleus. Its subcellular location is the cytoplasm. The enzyme catalyses prostaglandin H2 = prostaglandin E2. The catalysed reaction is prostaglandin H2 = (12S)-hydroxy-(5Z,8E,10E)-heptadecatrienoate + malonaldehyde. It participates in lipid metabolism; prostaglandin biosynthesis. With respect to regulation, isomerase activity is increased by sulfhydril compounds. Dithiothreitol (DTT) is most effective, followed by glutathione (GSH) and 2-mercaptoethanol. Isomerase that catalyzes the conversion of PGH2 into the more stable prostaglandin E2 (PGE2) (in vitro). The biological function and the GSH-dependent property of PTGES2 is still under debate. In vivo, PTGES2 could form a complex with GSH and heme and would not participate in PGE2 synthesis but would catalyze the degradation of prostaglandin E2 H2 (PGH2) to 12(S)-hydroxy-5(Z),8(E),10(E)-heptadecatrienoic acid (HHT) and malondialdehyde (MDA). May also have transactivation activity toward IFN-gamma (IFNG), possibly via an interaction with CEBPB; however, the relevance of transcription activation activity remains unclear. The protein is Prostaglandin E synthase 2 (Ptges2) of Mus musculus (Mouse).